The chain runs to 329 residues: GMP reductase (329 aa).

Residue Cys-178 is the Thioimidate intermediate of the active site. 207 to 230 (IIADGGIRNNGDIAKSIRFGATMC) lines the NADP(+) pocket.

The protein belongs to the IMPDH/GMPR family. GuaC type 2 subfamily.

It catalyses the reaction IMP + NH4(+) + NADP(+) = GMP + NADPH + 2 H(+). In terms of biological role, catalyzes the irreversible NADPH-dependent deamination of GMP to IMP. It functions in the conversion of nucleobase, nucleoside and nucleotide derivatives of G to A nucleotides, and in maintaining the intracellular balance of A and G nucleotides. This chain is GMP reductase, found in Lacticaseibacillus casei (strain BL23) (Lactobacillus casei).